The chain runs to 134 residues: D-ribose pyranase (134 aa).

His20 serves as the catalytic Proton donor. Substrate is bound by residues Asp28, His99, and 123 to 125 (YSN).

It belongs to the RbsD / FucU family. RbsD subfamily. In terms of assembly, homodecamer.

The protein localises to the cytoplasm. The enzyme catalyses beta-D-ribopyranose = beta-D-ribofuranose. The protein operates within carbohydrate metabolism; D-ribose degradation; D-ribose 5-phosphate from beta-D-ribopyranose: step 1/2. Catalyzes the interconversion of beta-pyran and beta-furan forms of D-ribose. The sequence is that of D-ribose pyranase from Staphylococcus aureus (strain Mu3 / ATCC 700698).